Consider the following 648-residue polypeptide: Sodium/nucleoside cotransporter 1 (648 aa).

Over 1-83 (MADDTPRQRE…LCREHWQLFE (83 aa)) the chain is Cytoplasmic. Residues 84–104 (WISKGLLSTAYIGFLIVACLL) form a helical membrane-spanning segment. Residues 105-108 (DFPR) lie on the Extracellular side of the membrane. Residues 109-129 (ALALFVITCVVLVFLAYNLLK) form a helical membrane-spanning segment. Topologically, residues 130-147 (RLLGSKLKKCVKFQGHSC) are cytoplasmic. A helical membrane pass occupies residues 148-168 (LSLWLKRGLALAAGLGVILWL). The Extracellular segment spans residues 169 to 175 (SLDTAQR). A helical transmembrane segment spans residues 176–196 (PEQLVSFAGICVFLVLLFAGS). At 197–201 (KHHRA) the chain is on the cytoplasmic side. A helical membrane pass occupies residues 202–222 (VSWRAVSWGLGLQFVLGLFVI). Topologically, residues 223–265 (RTEPGFVAFQWLGDQIRVFLSYTEAGSSFVFGEALVKDVFAFQ) are extracellular. The helical transmembrane segment at 266–286 (VLPIIVFFSCVMSVLYYLGLM) threads the bilayer. Residues 287-294 (QWVILKIA) are Cytoplasmic-facing. A helical membrane pass occupies residues 295-318 (WLMQVTMGTSATETLSVAGNIFVS). Residues 319 to 339 (QTEAPLLIRPYLADMTLSEVH) are Extracellular-facing. Residues 340 to 360 (VVMTGGYATIAGSLLGAYISF) traverse the membrane as a helical segment. Residue glycine 361 is a topological domain, cytoplasmic. The chain crosses the membrane as a helical span at residues 362–380 (IDASSLIAASVMAAPCALA). Residues 381–427 (LSKLVYPEVEESKFRSEEGVKLTYGDAQNLVEAASAGAAISVKVVAN) are Extracellular-facing. A helical membrane pass occupies residues 428–448 (IAANLIAFLAVLAFINAALSW). Residues 449 to 470 (LGDMVDIQGLSFQLICSYVLRP) lie on the Cytoplasmic side of the membrane. Residues 471–491 (VAFLMGVAWEDCPVVAELLGI) form a helical membrane-spanning segment. The Extracellular segment spans residues 492-531 (KLFLNEFVAYQELSQYKQRRLAGAEEWLGDKKQWISVRAE). A helical transmembrane segment spans residues 532–552 (ILTTYALCGFANFSSIGIMLG). At 553–571 (GLTSMVPQRRSDFSQIVLR) the chain is on the cytoplasmic side. Residues 572-592 (ALITGAFVSLVNACVAGILYV) traverse the membrane as a helical segment. Residues 593–648 (PRGVEVDCMSLLNQTVSSSSFEVYLCCRQVFQNTSLEFGQEALHNCCRFYNHTVCT) lie on the Extracellular side of the membrane. N-linked (GlcNAc...) asparagine glycosylation is found at asparagine 605, asparagine 625, and asparagine 643.

This sequence belongs to the concentrative nucleoside transporter (CNT) (TC 2.A.41) family. In terms of processing, N-glycosylated. N-glycosylation is required for localization to the plasma membrane and the transporter activity.

It localises to the cell membrane. Its subcellular location is the apical cell membrane. The catalysed reaction is uridine(out) + Na(+)(out) = uridine(in) + Na(+)(in). It carries out the reaction thymidine(out) + Na(+)(out) = thymidine(in) + Na(+)(in). It catalyses the reaction cytidine(out) + Na(+)(out) = cytidine(in) + Na(+)(in). The enzyme catalyses adenosine(out) + Na(+)(out) = adenosine(in) + Na(+)(in). With respect to regulation, due to its high apparent affinity but slow transport, adenosine could act as a negative regulator of pyrimidine transport under some conditions. Sodium and pyrimidine nucleoside symporter of the plasma membrane that imports uridine, thymidine and cytidine into cells by coupling their transport to the transmembrane sodium electrochemical gradient. Also transports adenosine, an atypical substrate transported with high apparent affinity, but low maximum velocity. Therefore, exhibits the transport characteristics of the nucleoside transport system cit or N2 subtype (N2/cit). Involved in renal nucleoside (re)absorption. This is Sodium/nucleoside cotransporter 1 from Mus musculus (Mouse).